A 212-amino-acid chain; its full sequence is Calaxin (212 aa).

EF-hand domains are found at residues 65 to 100 (TDDMIMDRVFRGFDKDNDGCISVSEWIHGLSLFLRG), 101 to 136 (TLDEKMKYCFEVFDLNGDGFISKEEMFHMLKNSLLK), and 146 to 181 (GIKDLVEITLKKMDHDHDGKLSFVDYEKAVREENLL). Ca(2+) is bound by residues Asp-78, Asp-80, Asp-82, Cys-84, Glu-89, Asp-114, Asn-116, Asp-118, Glu-125, Asp-159, Asp-161, Asp-163, Lys-165, and Asp-170.

In terms of assembly, component of the outer dynein arm-docking complex along with ODAD1, ODAD2, ODAD3 and ODAD4.

It localises to the cytoplasm. The protein localises to the cytoskeleton. Its subcellular location is the cilium axoneme. The protein resides in the cell projection. It is found in the cilium. It localises to the flagellum. Functionally, component of the outer dynein arm-docking complex (ODA-DC) that mediates outer dynein arms (ODA) binding onto the doublet microtubule. Seems to regulate the assembly of both ODAs and their axonemal docking complex onto ciliary microtubules. Regulates ciliary and flagellar motility and is required for cilia-driven determination of body laterality. The protein is Calaxin (Clxn) of Mus musculus (Mouse).